We begin with the raw amino-acid sequence, 509 residues long: Photosystem II CP47 reaction center protein (509 aa).

6 helical membrane-spanning segments follow: residues 21 to 36 (AVHL…WAGS), 101 to 115 (IILS…IWHW), 140 to 156 (GIHL…FGAF), 203 to 218 (IAAG…FHLT), 237 to 252 (VLSS…AFVT), and 457 to 472 (NFAL…HGGR).

The protein belongs to the PsbB/PsbC family. PsbB subfamily. In terms of assembly, PSII is composed of 1 copy each of membrane proteins PsbA, PsbB, PsbC, PsbD, PsbE, PsbF, PsbH, PsbI, PsbJ, PsbK, PsbL, PsbM, PsbT, PsbX, PsbY, PsbZ, Psb30/Ycf12, at least 3 peripheral proteins of the oxygen-evolving complex and a large number of cofactors. It forms dimeric complexes. The cofactor is Binds multiple chlorophylls. PSII binds additional chlorophylls, carotenoids and specific lipids..

The protein localises to the plastid. The protein resides in the chloroplast thylakoid membrane. Functionally, one of the components of the core complex of photosystem II (PSII). It binds chlorophyll and helps catalyze the primary light-induced photochemical processes of PSII. PSII is a light-driven water:plastoquinone oxidoreductase, using light energy to abstract electrons from H(2)O, generating O(2) and a proton gradient subsequently used for ATP formation. This chain is Photosystem II CP47 reaction center protein, found in Trieres chinensis (Marine centric diatom).